Consider the following 172-residue polypeptide: S-ribosylhomocysteine lyase (172 aa).

Residues H54, H58, and C128 each coordinate Fe cation.

This sequence belongs to the LuxS family. In terms of assembly, homodimer. Fe cation serves as cofactor.

The enzyme catalyses S-(5-deoxy-D-ribos-5-yl)-L-homocysteine = (S)-4,5-dihydroxypentane-2,3-dione + L-homocysteine. Its function is as follows. Involved in the synthesis of autoinducer 2 (AI-2) which is secreted by bacteria and is used to communicate both the cell density and the metabolic potential of the environment. The regulation of gene expression in response to changes in cell density is called quorum sensing. Catalyzes the transformation of S-ribosylhomocysteine (RHC) to homocysteine (HC) and 4,5-dihydroxy-2,3-pentadione (DPD). The polypeptide is S-ribosylhomocysteine lyase (Vibrio vulnificus (strain CMCP6)).